Consider the following 2568-residue polypeptide: Highly reducing polyketide synthase AN6791 (2568 aa).

The 435-residue stretch at Ala11–Ser445 folds into the Ketosynthase family 3 (KS3) domain. Catalysis depends on for beta-ketoacyl synthase activity residues Cys200, His326, and His366. One can recognise a Malonyl-CoA:ACP transacylase (MAT) domain in the interval Val558–Val882. Residues His949–Ala1087 are N-terminal hotdog fold. One can recognise a PKS/mFAS DH domain in the interval His949–Pro1258. His981 acts as the Proton acceptor; for dehydratase activity in catalysis. The C-terminal hotdog fold stretch occupies residues Thr1104–Pro1258. Asp1169 acts as the Proton donor; for dehydratase activity in catalysis. The interval Arg1311–Trp1620 is methyltransferase (CMet) domain. An Enoyl reductase (ER) domain is found at Gly1857–Leu2174. The 179-residue stretch at Ala2197–Lys2375 folds into the Ketoreductase (KR) domain. Residues Gln2481–Ser2558 enclose the Carrier domain. O-(pantetheine 4'-phosphoryl)serine is present on Ser2518.

It depends on pantetheine 4'-phosphate as a cofactor.

The protein operates within secondary metabolite biosynthesis. Functionally, highly reducing polyketide synthase; part of a cluster that mediates the biosynthesis of a yet undetermined secondary metabolite. With esterase AN6793, produces a pathway intermediate compound with molecular weight 258. The protein is Highly reducing polyketide synthase AN6791 of Emericella nidulans (strain FGSC A4 / ATCC 38163 / CBS 112.46 / NRRL 194 / M139) (Aspergillus nidulans).